Here is an 81-residue protein sequence, read N- to C-terminus: Centromere protein X (81 aa).

Met1 is modified (N-acetylmethionine).

It belongs to the CENP-X/MHF2 family. Heterodimer with CENPX, sometimes called MHF; this interaction stabilizes both partners. MHF heterodimers can assemble to form tetrameric structures. MHF also coassemble with CENPT-CENPW heterodimers at centromeres to form the tetrameric CENP-T-W-S-X complex. Forms a discrete complex with FANCM and CENPX, called FANCM-MHF; this interaction, probably mediated by direct binding between CENPS and FANCM, leads to synergistic activation of double-stranded DNA binding and strongly stimulates FANCM-mediated DNA remodeling. Recruited by FANCM to the Fanconi anemia (FA) core complex, which consists of CENPS, CENPX, FANCA, FANCB, FANCC, FANCE, FANCF, FANCG, FANCL, FANCM, FAAP24 and FAAP100. The FA core complex associates with Bloom syndrome (BLM) complex, which consists of at least BLM, DNA topoisomerase 3-alpha (TOP3A), RMI1/BLAP75, RPA1/RPA70 and RPA2/RPA32. The super complex between FA and BLM is called BRAFT.

It is found in the nucleus. It localises to the chromosome. Its subcellular location is the centromere. The protein resides in the kinetochore. DNA-binding component of the Fanconi anemia (FA) core complex. Required for the normal activation of the FA pathway, leading to monoubiquitination of the FANCI-FANCD2 complex in response to DNA damage, cellular resistance to DNA cross-linking drugs, and prevention of chromosomal breakage. In complex with CENPS (MHF heterodimer), crucial cofactor for FANCM in both binding and ATP-dependent remodeling of DNA. Stabilizes FANCM. In complex with CENPS and FANCM (but not other FANC proteins), rapidly recruited to blocked forks and promotes gene conversion at blocked replication forks. In complex with CENPS, CENPT and CENPW (CENP-T-W-S-X heterotetramer), involved in the formation of a functional kinetochore outer plate, which is essential for kinetochore-microtubule attachment and faithful mitotic progression. As a component of MHF and CENP-T-W-S-X complexes, binds DNA and bends it to form a nucleosome-like structure. DNA-binding function is fulfilled in the presence of CENPS, with the following preference for DNA substates: Holliday junction &gt; double-stranded &gt; splay arm &gt; single-stranded. Does not bind DNA on its own. This is Centromere protein X (CENPX) from Homo sapiens (Human).